The chain runs to 430 residues: Potassium channel subfamily K member 12 (430 aa).

Topologically, residues 1 to 38 are cytoplasmic; that stretch reads MSSRSPRPPPRRCRRRLPRPSCCCCCCRRSHLNEDTGR. Positions 11–16 are ER retention/retrieval signal; the sequence is RRCRRR. Residues 39–59 form a helical membrane-spanning segment; that stretch reads FVLLAALIGLYLVAGATVFSA. Residue Asn78 is glycosylated (N-linked (GlcNAc...) asparagine). The segment at residues 114-134 is an intramembrane region (pore-forming); it reads WDFPGAFYFVGTVVSTIGFGM. Thr129, Ile130, and Gly131 together coordinate K(+). Positions 129–134 are selectivity filter 1; that stretch reads TIGFGM. A helical transmembrane segment spans residues 145 to 165; that stretch reads FLIAYGLFGCAGTILFFNLFL. Residues 166-212 are Cytoplasmic-facing; the sequence is ERIISLLAFIMRACRERQLRRSGLLPATFRRGSALSEADSLAGWKPS. A helical membrane pass occupies residues 213 to 233; it reads VYHVLLILGLFAVLLACCASA. The pore-forming intramembrane region spans 243-263; the sequence is YVDSLYFCFVTFSTIGFGDLV. Residues Thr256, Ile257, Gly258, and Phe259 each coordinate K(+). A selectivity filter 2 region spans residues 256-261; the sequence is TIGFGD. Residues 282-302 traverse the membrane as a helical segment; sequence LFILLGVCCIYSLFNVISILI. The Cytoplasmic portion of the chain corresponds to 303–430; the sequence is KQVLNWMLRK…NRLAETSASR (128 aa).

Belongs to the two pore domain potassium channel (TC 1.A.1.8) family. In terms of assembly, homodimer. Heterodimer with KCNK13. As to expression, highly expressed in most brain regions. Also expressed in other tissues such as lung, kidney, liver, stomach and spleen.

Its subcellular location is the cell membrane. It is found in the endoplasmic reticulum membrane. The catalysed reaction is K(+)(in) = K(+)(out). Functionally, k(+) channel subunit that may homo- and heterodimerize to form functional channels with distinct regulatory and gating properties. Can heterodimerize with KCNK13 subunit to conduct K(+) outward rectifying currents at the plasma membrane. The homodimers are mainly retained in the endoplasmic reticulum compartment and may be targeted to the cell surface upon phosphorylation or other activation signals yet to be elucidated. The sequence is that of Potassium channel subfamily K member 12 (Kcnk12) from Rattus norvegicus (Rat).